The following is a 506-amino-acid chain: Maturase K (506 aa).

This sequence belongs to the intron maturase 2 family. MatK subfamily.

The protein localises to the plastid. It localises to the chloroplast. In terms of biological role, usually encoded in the trnK tRNA gene intron. Probably assists in splicing its own and other chloroplast group II introns. The polypeptide is Maturase K (Olea europaea (Common olive)).